We begin with the raw amino-acid sequence, 587 residues long: Bifunctional lycopene cyclase/phytoene synthase (587 aa).

Residues 1-236 (MGLDYILVHV…IVFGLVCIDY (236 aa)) are lycopene beta-cyclase. The next 7 membrane-spanning stretches (helical) occupy residues 5 to 25 (YILVHVTYNIPLAGILTLVYW), 35 to 55 (KISTLVIISLVATIPWDSYLV), 65 to 85 (NGVIGWTLYDIPSEEVFFFII), 91 to 111 (SLVYLILTRWLVLPMYLGTVA), 116 to 136 (LIGASILLLAISVGLIALCFG), 145 to 165 (IITWAGPFLLIQWVFSSGFII), and 218 to 238 (LFFLITNIVIVFGLVCIDYAI). Residues 243 to 587 (CELVQSPQAV…VAYRAMAWRK (345 aa)) form a phytoene synthase region.

The protein in the N-terminal section; belongs to the lycopene beta-cyclase family. It in the C-terminal section; belongs to the phytoene/squalene synthase family.

The protein localises to the membrane. The catalysed reaction is all-trans-lycopene = gamma-carotene. The enzyme catalyses gamma-carotene = all-trans-beta-carotene. It carries out the reaction 2 (2E,6E,10E)-geranylgeranyl diphosphate = 15-cis-phytoene + 2 diphosphate. It participates in carotenoid biosynthesis; beta-carotene biosynthesis. It functions in the pathway carotenoid biosynthesis; phytoene biosynthesis; all-trans-phytoene from geranylgeranyl diphosphate: step 1/1. Bifunctional enzyme that catalyzes the reactions from geranylgeranyl diphosphate to phytoene (phytoene synthase) and lycopene to beta-carotene via the intermediate gamma-carotene (lycopene cyclase). The polypeptide is Bifunctional lycopene cyclase/phytoene synthase (Aspergillus oryzae (strain ATCC 42149 / RIB 40) (Yellow koji mold)).